Consider the following 503-residue polypeptide: Maturase K (503 aa).

It belongs to the intron maturase 2 family. MatK subfamily.

It is found in the plastid. It localises to the chloroplast. In terms of biological role, usually encoded in the trnK tRNA gene intron. Probably assists in splicing its own and other chloroplast group II introns. The polypeptide is Maturase K (Actinodium cunninghamii (Albany daisy)).